The sequence spans 977 residues: Kinesin-like protein KIN-14D (977 aa).

Residues 1–13 are compositionally biased toward low complexity; it reads MSSSNNAAAAAAS. Positions 1–20 are disordered; that stretch reads MSSSNNAAAAAASPDPSRRR. A Calponin-homology (CH) domain is found at 17-118; the sequence is SRRREDVVGW…CILALKDRFG (102 aa). Residues 297–384 are a coiled coil; it reads KAEETQRIED…TKRRIELEEL (88 aa). Residues 472-800 enclose the Kinesin motor domain; sequence NIRVYCRIRP…LKFAERVSGV (329 aa). 556–563 contributes to the ATP binding site; sequence GQTGSGKT. Residues 812–847 are a coiled coil; it reads KEGKDVKELMDQLSLLKDTISKKDEEIDRLQLLNSS. Residues 852–977 are disordered; it reads PTRQADSVLK…RNNSTLKRGP (126 aa). Polar residues-rich tracts occupy residues 861 to 879 and 956 to 977; these read KHSS…TSVG and RKSS…KRGP.

Belongs to the TRAFAC class myosin-kinesin ATPase superfamily. Kinesin family. KIN-14 subfamily.

The protein is Kinesin-like protein KIN-14D of Oryza sativa subsp. japonica (Rice).